The chain runs to 144 residues: Grifin (144 aa).

A Galectin domain is found at 5-133; that stretch reads FEAFCAGGLA…EHRLAQVELA (129 aa). Serine 138 carries the post-translational modification Phosphoserine.

As to quaternary structure, homodimer.

The polypeptide is Grifin (Grifin) (Mus musculus (Mouse)).